The sequence spans 1857 residues: Peripheral-type benzodiazepine receptor-associated protein 1 (1857 aa).

Disordered stretches follow at residues 1 to 103 (MEQL…RPED), 284 to 321 (QRET…QEDA), and 565 to 629 (PKDL…DTAS). A compositionally biased stretch (basic and acidic residues) spans 55-67 (LRSEESSKPKGDG). The segment covering 87 to 96 (LGQQASSSGP) has biased composition (polar residues). Residues 289–298 (PLPPSWPPGP) are compositionally biased toward pro residues. Composition is skewed to low complexity over residues 299 to 316 (ALQA…GEAT) and 603 to 616 (SLSN…IHNS). The SH3 1 domain occupies 653-720 (ARIQVFLARY…PSNFVERVSD (68 aa)). Residues 729-789 (PELADLSHSS…PSPEGLGEPP (61 aa)) are disordered. Positions 755-764 (GGQSSVGRSQ) are enriched in low complexity. 3 Fibronectin type-III domains span residues 791–882 (VPYP…ARAG), 884–976 (VPSQ…TLPA), and 981–1081 (APLD…LAPA). Disordered stretches follow at residues 1083–1311 (LPAR…SDEE), 1330–1479 (FSIP…CSRG), and 1501–1601 (YDSE…RGVR). The segment covering 1098-1116 (ARAPLASASPGPGDPSSPL) has biased composition (low complexity). Over residues 1138 to 1147 (EMAKGSHEDP) the composition is skewed to basic and acidic residues. Polar residues predominate over residues 1201 to 1218 (ASSSTQGARAQQAPNTEM). Residues 1259–1274 (DIQEEEEEEEEEEEEE) show a composition bias toward acidic residues. Residues 1278–1292 (RTCSFQKQVAGNSIR) are compositionally biased toward polar residues. The span at 1333–1346 (PEEEEEEEEDEEEE) shows a compositional bias: acidic residues. Composition is skewed to basic and acidic residues over residues 1420 to 1429 (RPPDPREHCS) and 1554 to 1586 (AWEK…EARG). In terms of domain architecture, SH3 2 spans 1625–1693 (LPVRIFVALF…PCNMVAEVAV (69 aa)). Disordered stretches follow at residues 1723–1761 (VYST…VPSA) and 1823–1857 (SNFL…RVQC). Residues 1764 to 1831 (KAPHSMVAAF…PSNFLEGPGP (68 aa)) form the SH3 3 domain.

It belongs to the RIMBP family. In terms of assembly, interacts with RIMS1 and RIMS2. Interacts with TSPO. Interacts with CACNA1A. As to expression, predominantly expressed in brain, pituitary gland and thymus in adults. In adult brain, highest expression found in temporal lobe and the putamen, followed by amygdala, caudate nucleus, cerebral cortex, occipital and frontal lobe. A high expression level is also observed in fetal tissues like brain, heart, kidney and thymus.

The protein resides in the cytoplasm. It is found in the mitochondrion. Its function is as follows. Required for synaptic transmission regulation. It probably controls the recruitement of voltage-gated calcium channels to the presynaptic membrane, and modulates neurotransmitter release. The sequence is that of Peripheral-type benzodiazepine receptor-associated protein 1 from Homo sapiens (Human).